Consider the following 363-residue polypeptide: Mitogen-activated protein kinase kinase 2 (363 aa).

S56 is modified (phosphoserine). A Protein kinase domain is found at 70–330 (LDMVKVIGKG…AKELMEHPFL (261 aa)). Residues 76 to 84 (IGKGSSGVV) and K99 contribute to the ATP site. The active-site Proton acceptor is D192. Residues T220, T226, and T230 each carry the phosphothreonine modification.

This sequence belongs to the protein kinase superfamily. STE Ser/Thr protein kinase family. MAP kinase kinase subfamily. As to quaternary structure, interacts with MEKK1, MPK4 and MPK6. May form a ternary complex composed of MEKK1 and MKK1/MKK2 and MPK4. Interacts with MPK10 and MPK11. Interacts with MAPKKK5 mainly in the cytosol. Phosphorylation at Thr-220 and Thr-226 by MAP kinase kinase kinases positively regulates kinase activity. Phosphorylated by MEKK1 in response to cold. Phosphorylated by MAPKKK5.

The enzyme catalyses L-seryl-[protein] + ATP = O-phospho-L-seryl-[protein] + ADP + H(+). The catalysed reaction is L-threonyl-[protein] + ATP = O-phospho-L-threonyl-[protein] + ADP + H(+). It carries out the reaction L-tyrosyl-[protein] + ATP = O-phospho-L-tyrosyl-[protein] + ADP + H(+). With respect to regulation, activated in response to cold and salt stresses through serine and threonine phosphorylation by MEKK1. Functionally, MEKK1, MKK1/MKK2 and MPK4 function in a signaling pathway that modulates the expression of genes responding to biotic and abiotic stresses and also plays an important role in pathogen defense by negatively regulating innate immunity. Plays a role in abiotic stress tolerance and plant disease resistance through activation of MPK4 and MPK6 by phosphorylation. Acts redundantly with MKK1. This Arabidopsis thaliana (Mouse-ear cress) protein is Mitogen-activated protein kinase kinase 2 (MKK2).